An 85-amino-acid polypeptide reads, in one-letter code: U4-theraphotoxin-Hhn1ab (85 aa).

Residues 1–22 form the signal peptide; it reads MKVTLIAILTCAAVLVLHTTAA. A propeptide spanning residues 23–48 is cleaved from the precursor; the sequence is EELEAESQLMEVGMPDTELAAVDEER. 2 cysteine pairs are disulfide-bonded: cysteine 56-cysteine 77 and cysteine 71-cysteine 82.

It belongs to the neurotoxin 12 (Hwtx-2) family. 02 (Hwtx-2) subfamily. In terms of tissue distribution, expressed by the venom gland.

The protein localises to the secreted. In terms of biological role, postsynaptic neurotoxin. In Cyriopagopus hainanus (Chinese bird spider), this protein is U4-theraphotoxin-Hhn1ab.